The following is an 844-amino-acid chain: Eukaryotic translation elongation factor 2 (844 aa).

Residues 17-348 (RNIRNMSVIA…MIAIHLPSPV (332 aa)) enclose the tr-type G domain. 26–33 (AHVDHGKS) contacts GTP. Phosphothreonine occurs at positions 57 and 59. GTP contacts are provided by residues 162–165 (NKMD) and 219–221 (SGL). Position 701 is a diphthamide (H701).

This sequence belongs to the TRAFAC class translation factor GTPase superfamily. Classic translation factor GTPase family. EF-G/EF-2 subfamily. Phosphorylation by EF-2 kinase completely inactivates eEF2.

The protein localises to the cytoplasm. The enzyme catalyses GTP + H2O = GDP + phosphate + H(+). In terms of biological role, catalyzes the GTP-dependent ribosomal translocation step during translation elongation. During this step, the ribosome changes from the pre-translocational (PRE) to the post-translocational (POST) state as the newly formed A-site-bound peptidyl-tRNA and P-site-bound deacylated tRNA move to the P and E sites, respectively. Catalyzes the coordinated movement of the two tRNA molecules, the mRNA and conformational changes in the ribosome. The sequence is that of Eukaryotic translation elongation factor 2 from Drosophila melanogaster (Fruit fly).